Reading from the N-terminus, the 666-residue chain is Vicilin-like antimicrobial peptides 2-2 (666 aa).

A signal peptide spans 1-27 (MAINTSNLCSLLFLLSLFLLSTTVSLA). Disordered stretches follow at residues 161-191 (QQKRYEEQQREDEEKYEERMKEEDNKRDPQQ) and 221-251 (RQHGRGGDLINPQRGGSGRYEEGEEKQSDNP). Residues 239–251 (RYEEGEEKQSDNP) show a composition bias toward basic and acidic residues. Cupin type-1 domains are found at residues 271–410 (SVLE…ERLR) and 455–625 (YNLF…KEVE).

It belongs to the 7S seed storage protein family.

It localises to the secreted. In terms of biological role, antimicrobial peptides 2b, 2c and 2d have antibacterial and antifungal activity against a range of species. In Macadamia integrifolia (Macadamia nut), this protein is Vicilin-like antimicrobial peptides 2-2.